The sequence spans 122 residues: Guanine nucleotide exchange factor MSS4 homolog (122 aa).

An MSS4 domain is found at 9 to 120; the sequence is EQITDGKNKS…YLALKRVVHK (112 aa). 4 residues coordinate Zn(2+): Cys22, Cys25, Cys92, and Cys95.

The protein belongs to the DSS4/MSS4 family. Interacts with Rab8.

Its subcellular location is the basal cell membrane. Guanine-nucleotide-releasing protein that acts on members of the sec4/ypt1/rab subfamily such as Rab8. During egg development, essential for establishing and maintaining epithelial cell polarity by regulating the correct polarized deposition of basal membrane (BM) proteins such as trol/Pcan and vkg/Coll IV to the basal surface of follicular epithelial (FE) cells. Likely to function by restricting the activity of the vesicle transport regulator Rab8 to the basal membrane, and thus directs BM protein-containing vesicles to the basal side of the FE cells. This function is independent of the Crag/Rab10 regulation of polarized BM protein secretion in the FE. This is Guanine nucleotide exchange factor MSS4 homolog from Drosophila melanogaster (Fruit fly).